We begin with the raw amino-acid sequence, 135 residues long: Large ribosomal subunit protein uL16c (135 aa).

The protein belongs to the universal ribosomal protein uL16 family. Part of the 50S ribosomal subunit.

The protein resides in the plastid. It is found in the chloroplast. This chain is Large ribosomal subunit protein uL16c, found in Ceratophyllum demersum (Rigid hornwort).